The sequence spans 237 residues: 1-(5-phosphoribosyl)-5-[(5-phosphoribosylamino)methylideneamino] imidazole-4-carboxamide isomerase (237 aa).

The active-site Proton acceptor is Asp-8. Asp-129 (proton donor) is an active-site residue.

Belongs to the HisA/HisF family.

Its subcellular location is the cytoplasm. It catalyses the reaction 1-(5-phospho-beta-D-ribosyl)-5-[(5-phospho-beta-D-ribosylamino)methylideneamino]imidazole-4-carboxamide = 5-[(5-phospho-1-deoxy-D-ribulos-1-ylimino)methylamino]-1-(5-phospho-beta-D-ribosyl)imidazole-4-carboxamide. The protein operates within amino-acid biosynthesis; L-histidine biosynthesis; L-histidine from 5-phospho-alpha-D-ribose 1-diphosphate: step 4/9. The protein is 1-(5-phosphoribosyl)-5-[(5-phosphoribosylamino)methylideneamino] imidazole-4-carboxamide isomerase of Clostridium botulinum (strain Alaska E43 / Type E3).